The following is a 644-amino-acid chain: Sodium/potassium/calcium exchanger 3 (644 aa).

An N-terminal signal peptide occupies residues 1–44 (MRPSGDEDRARRRRRRRRRRDLLLSQLCFLASVALLLWSLSSLR). Topologically, residues 45-107 (EQKELDLMDL…DIFTNEDRRQ (63 aa)) are extracellular. N-linked (GlcNAc...) asparagine glycans are attached at residues Asn-71 and Asn-86. Residues 108–128 (GAVVLHVLCAIYMFYALAIVC) traverse the membrane as a helical segment. The Cytoplasmic portion of the chain corresponds to 129–153 (DDFFVPSLEKICERLHLSEDVAGAT). One copy of the Alpha-1 repeat lies at 149–189 (VAGATFMAAGSSAPELFTSVIGVFITKGDVGVGTIVGSAVF). A helical transmembrane segment spans residues 154-174 (FMAAGSSAPELFTSVIGVFIT). Over 175–182 (KGDVGVGT) the chain is Extracellular. Residues 183–203 (IVGSAVFNILCIIGVCGLFAG) traverse the membrane as a helical segment. Residues 204-210 (QVVALSS) lie on the Cytoplasmic side of the membrane. The helical transmembrane segment at 211–231 (WCLLRDSIYYTLSVIALIVFI) threads the bilayer. The Extracellular segment spans residues 232 to 234 (YDE). A helical membrane pass occupies residues 235 to 255 (KVSWWESLVLVLMYLIYIVIM). Topologically, residues 256–484 (KYNACIHQCF…WFMVTFASST (229 aa)) are cytoplasmic. Ser-308 bears the Phosphoserine mark. A disordered region spans residues 405–442 (AEAGNETENENEDNENDEEEEEDEDDDEGPYTPFDTPS). Over residues 409 to 433 (NETENENEDNENDEEEEEDEDDDEG) the composition is skewed to acidic residues. The helical transmembrane segment at 485 to 505 (LWIAAFSYMMVWMVTIIGYTL) threads the bilayer. Residues 506–510 (GIPDV) are Extracellular-facing. The chain crosses the membrane as a helical span at residues 511-531 (IMGITFLAAGTSVPDCMASLI). Residues 518 to 549 (AAGTSVPDCMASLIVARQGMGDMAVSNSIGSN) form an Alpha-2 repeat. The Cytoplasmic segment spans residues 532–549 (VARQGMGDMAVSNSIGSN). The helical transmembrane segment at 550–570 (VFDILIGLGLPWALQTLAVDY) threads the bilayer. Residues 571–580 (GSYIRLNSRG) are Extracellular-facing. A helical membrane pass occupies residues 581–601 (LIYSVGLLLASVFVTVFGVHL). Over 602–615 (NKWQLDKKLGCGCL) the chain is Cytoplasmic. Residues 616–636 (LLYGVFLCFSIMTEFNVFTFV) traverse the membrane as a helical segment. Over 637–644 (NLPMCGDH) the chain is Extracellular.

It belongs to the Ca(2+):cation antiporter (CaCA) (TC 2.A.19) family. SLC24A subfamily. In terms of tissue distribution, abundant in the brain. Expressed at low levels in the aorta, uterus and intestine.

It is found in the cell membrane. The enzyme catalyses Ca(2+)(out) + K(+)(out) + 4 Na(+)(in) = Ca(2+)(in) + K(+)(in) + 4 Na(+)(out). In terms of biological role, calcium, potassium:sodium antiporter that transports 1 Ca(2+) and 1 K(+) in exchange for 4 Na(+). This is Sodium/potassium/calcium exchanger 3 (SLC24A3) from Homo sapiens (Human).